The sequence spans 262 residues: Type III pantothenate kinase (262 aa).

An ATP-binding site is contributed by 6–13 (DVGNTNTV). Substrate contacts are provided by residues Y101 and 108 to 111 (GADR). D110 (proton acceptor) is an active-site residue. Position 130 (D130) interacts with K(+). Residue T133 participates in ATP binding. Residue T186 coordinates substrate.

Belongs to the type III pantothenate kinase family. In terms of assembly, homodimer. The cofactor is NH4(+). K(+) serves as cofactor.

The protein resides in the cytoplasm. The enzyme catalyses (R)-pantothenate + ATP = (R)-4'-phosphopantothenate + ADP + H(+). Its pathway is cofactor biosynthesis; coenzyme A biosynthesis; CoA from (R)-pantothenate: step 1/5. Catalyzes the phosphorylation of pantothenate (Pan), the first step in CoA biosynthesis. The polypeptide is Type III pantothenate kinase (Desulforapulum autotrophicum (strain ATCC 43914 / DSM 3382 / VKM B-1955 / HRM2) (Desulfobacterium autotrophicum)).